The chain runs to 248 residues: 23S rRNA (guanosine-2'-O-)-methyltransferase RlmB (248 aa).

Residues glycine 198, leucine 218, and leucine 227 each coordinate S-adenosyl-L-methionine.

The protein belongs to the class IV-like SAM-binding methyltransferase superfamily. RNA methyltransferase TrmH family. RlmB subfamily.

The protein localises to the cytoplasm. The enzyme catalyses guanosine(2251) in 23S rRNA + S-adenosyl-L-methionine = 2'-O-methylguanosine(2251) in 23S rRNA + S-adenosyl-L-homocysteine + H(+). Its function is as follows. Specifically methylates the ribose of guanosine 2251 in 23S rRNA. The protein is 23S rRNA (guanosine-2'-O-)-methyltransferase RlmB of Pseudomonas putida (strain ATCC 47054 / DSM 6125 / CFBP 8728 / NCIMB 11950 / KT2440).